Here is a 76-residue protein sequence, read N- to C-terminus: ATP synthase subunit 9, mitochondrial (76 aa).

2 helical membrane-spanning segments follow: residues Ile-14 to Ile-34 and Ala-56 to Val-76.

This sequence belongs to the ATPase C chain family. As to quaternary structure, F-type ATPases have 2 components, CF(1) - the catalytic core - and CF(0) - the membrane proton channel. CF(1) has five subunits: alpha(3), beta(3), gamma(1), delta(1), epsilon(1). CF(0) has three main subunits: a, b and c.

The protein localises to the mitochondrion membrane. Functionally, mitochondrial membrane ATP synthase (F(1)F(0) ATP synthase or Complex V) produces ATP from ADP in the presence of a proton gradient across the membrane which is generated by electron transport complexes of the respiratory chain. F-type ATPases consist of two structural domains, F(1) - containing the extramembraneous catalytic core and F(0) - containing the membrane proton channel, linked together by a central stalk and a peripheral stalk. During catalysis, ATP synthesis in the catalytic domain of F(1) is coupled via a rotary mechanism of the central stalk subunits to proton translocation. Part of the complex F(0) domain. A homomeric c-ring of probably 10 subunits is part of the complex rotary element. The sequence is that of ATP synthase subunit 9, mitochondrial (ATP9) from Candida glabrata (strain ATCC 2001 / BCRC 20586 / JCM 3761 / NBRC 0622 / NRRL Y-65 / CBS 138) (Yeast).